The sequence spans 186 residues: Signal peptidase I P (186 aa).

Topologically, residues 1 to 15 (MTKEKVFKKKSSILE) are cytoplasmic. Residues 16 to 35 (WGKAIVIAVILALLIRNFLF) form a helical membrane-spanning segment. The Extracellular portion of the chain corresponds to 36-186 (EPYVVEGKSM…FPFSNMRKAK (151 aa)). Residues S44 and K86 contribute to the active site.

The protein belongs to the peptidase S26 family.

The protein resides in the cell membrane. The catalysed reaction is Cleavage of hydrophobic, N-terminal signal or leader sequences from secreted and periplasmic proteins.. This is Signal peptidase I P (sipP) from Bacillus subtilis subsp. natto.